The chain runs to 132 residues: 3-aminoacrylate deaminase RutC (132 aa).

Belongs to the RutC family.

It carries out the reaction (Z)-3-aminoacrylate + H2O + H(+) = 3-oxopropanoate + NH4(+). In terms of biological role, involved in pyrimidine catabolism. Catalyzes the deamination of 3-aminoacrylate to malonic semialdehyde, a reaction that can also occur spontaneously. RutC may facilitate the reaction and modulate the metabolic fitness, rather than catalyzing essential functions. The sequence is that of 3-aminoacrylate deaminase RutC from Cronobacter turicensis (strain DSM 18703 / CCUG 55852 / LMG 23827 / z3032).